We begin with the raw amino-acid sequence, 317 residues long: Methionyl-tRNA formyltransferase (317 aa).

Ser112 to Pro115 lines the (6S)-5,6,7,8-tetrahydrofolate pocket.

It belongs to the Fmt family.

It carries out the reaction L-methionyl-tRNA(fMet) + (6R)-10-formyltetrahydrofolate = N-formyl-L-methionyl-tRNA(fMet) + (6S)-5,6,7,8-tetrahydrofolate + H(+). Functionally, attaches a formyl group to the free amino group of methionyl-tRNA(fMet). The formyl group appears to play a dual role in the initiator identity of N-formylmethionyl-tRNA by promoting its recognition by IF2 and preventing the misappropriation of this tRNA by the elongation apparatus. This chain is Methionyl-tRNA formyltransferase, found in Geobacter sulfurreducens (strain ATCC 51573 / DSM 12127 / PCA).